Here is a 77-residue protein sequence, read N- to C-terminus: Conotoxin CaHr91 (77 aa).

A signal peptide spans 1-19 (MKLTCALIITVLFLSITAD). Positions 20-43 (DSRGKQGYRALKSIAGMLNSKTVR) are excised as a propeptide. Disulfide bonds link C45-C60, C52-C65, and C59-C74.

It belongs to the conotoxin O1 superfamily. Expressed by the venom duct.

It is found in the secreted. The chain is Conotoxin CaHr91 from Conus capitaneus (Captain cone).